The following is a 471-amino-acid chain: Putative multidrug resistance protein MdtD (471 aa).

Topologically, residues 1-11 (MTDLPDSTRWQ) are periplasmic. A helical transmembrane segment spans residues 12-32 (LWIVAFGFFMQSLDTTIVNTA). At 33–48 (LPSMAQSLGESPLHMH) the chain is on the cytoplasmic side. The helical transmembrane segment at 49-69 (MVIVSYVLTVAVMLPASGWLA) threads the bilayer. The Periplasmic segment spans residues 70–76 (DKVGVRN). A helical transmembrane segment spans residues 77 to 97 (IFFTAIVLFTLGSLFCALSGT). Residues 98-101 (LNEL) are Cytoplasmic-facing. Residues 102–124 (LLARALQGVGGAMMVPVGRLTVM) form a helical membrane-spanning segment. Over 125–137 (KIVPREQYMAAMT) the chain is Periplasmic. Residues 138 to 158 (FVTLPGQIGPLLGPALGGLLV) traverse the membrane as a helical segment. At 159–164 (EYASWH) the chain is on the cytoplasmic side. A helical membrane pass occupies residues 165-185 (WIFLINIPVGIIGAITTLMLM). Residues 186–196 (PNYTMQTRRFD) lie on the Periplasmic side of the membrane. Residues 197-217 (LSGFLLLAVGMAVLTLALDGS) traverse the membrane as a helical segment. Over 218–224 (KGTGFSP) the chain is Cytoplasmic. The chain crosses the membrane as a helical span at residues 225–245 (LAIAGLVAVGVVALVLYLLHA). Over 246 to 262 (QNNNRALFSLKLFRTRT) the chain is Periplasmic. The helical transmembrane segment at 263–283 (FSLGLAGSFAGRIGSGMLPFM) threads the bilayer. At 284–285 (TP) the chain is on the cytoplasmic side. A helical membrane pass occupies residues 286-306 (VFLQIGFGFSPFHAGLMMIPM). Residues 307–341 (VLGSMGMKRIVVQVVNRFGYRRVLVATTLGLSLVT) lie on the Periplasmic side of the membrane. A helical membrane pass occupies residues 342–362 (LLFMTTALLGWYYVLPFVLFL). The Cytoplasmic portion of the chain corresponds to 363–395 (QGMVNSTRFSSMNTLTLKDLPDNLASSGNSLLS). A helical transmembrane segment spans residues 396 to 416 (MIMQLSMSIGVTIAGLLLGLF). The Periplasmic segment spans residues 417 to 430 (GSQHVSVDSGTTQT). A helical transmembrane segment spans residues 431 to 451 (VFMYTWLSMASIIALPAFIFA). Topologically, residues 452–471 (RVPNDTHQNVAISRRKRSAQ) are cytoplasmic.

It belongs to the major facilitator superfamily. TCR/Tet family.

It is found in the cell inner membrane. This chain is Putative multidrug resistance protein MdtD, found in Escherichia coli O6:H1 (strain CFT073 / ATCC 700928 / UPEC).